An 81-amino-acid polypeptide reads, in one-letter code: Short neurotoxin B (81 aa).

The first 21 residues, 1–21 (MKTLLLTLVVVTIVCLDLGYT), serve as a signal peptide directing secretion. 4 cysteine pairs are disulfide-bonded: Cys-24/Cys-43, Cys-38/Cys-60, Cys-62/Cys-73, and Cys-74/Cys-79.

This sequence belongs to the three-finger toxin family. Short-chain subfamily. Type I alpha-neurotoxin sub-subfamily. Expressed by the venom gland.

Its subcellular location is the secreted. Binds to muscle nicotinic acetylcholine receptor (nAChR) and inhibit acetylcholine from binding to the receptor, thereby impairing neuromuscular transmission. The sequence is that of Short neurotoxin B from Aipysurus laevis (Olive sea snake).